The sequence spans 347 residues: NADH-quinone oxidoreductase subunit H (347 aa).

A run of 8 helical transmembrane segments spans residues 21 to 41, 87 to 107, 118 to 138, 157 to 177, 195 to 215, 258 to 278, 283 to 303, and 323 to 343; these read VAGI…IIYA, GLFL…WAVI, INVG…GVIL, AQMI…VLFA, GIVN…MFLI, NVLL…LPPI, LYAV…FFVF, and WKIF…YLML.

It belongs to the complex I subunit 1 family. NDH-1 is composed of 14 different subunits. Subunits NuoA, H, J, K, L, M, N constitute the membrane sector of the complex.

The protein localises to the cell inner membrane. The catalysed reaction is a quinone + NADH + 5 H(+)(in) = a quinol + NAD(+) + 4 H(+)(out). Its function is as follows. NDH-1 shuttles electrons from NADH, via FMN and iron-sulfur (Fe-S) centers, to quinones in the respiratory chain. The immediate electron acceptor for the enzyme in this species is believed to be ubiquinone. Couples the redox reaction to proton translocation (for every two electrons transferred, four hydrogen ions are translocated across the cytoplasmic membrane), and thus conserves the redox energy in a proton gradient. This subunit may bind ubiquinone. This is NADH-quinone oxidoreductase subunit H from Sphingopyxis alaskensis (strain DSM 13593 / LMG 18877 / RB2256) (Sphingomonas alaskensis).